Consider the following 149-residue polypeptide: Large ribosomal subunit protein uL15 (149 aa).

A disordered region spans residues 30 to 63 (GLGKTAGRGHKGSFARKGGGKIKPGFEGGQTPMQ). The segment covering 36–49 (GRGHKGSFARKGGG) has biased composition (basic residues).

Belongs to the universal ribosomal protein uL15 family. Part of the 50S ribosomal subunit.

Binds to the 23S rRNA. The polypeptide is Large ribosomal subunit protein uL15 (Xylella fastidiosa (strain 9a5c)).